A 223-amino-acid polypeptide reads, in one-letter code: Sigma non-opioid intracellular receptor 1 (223 aa).

Residues 1-9 (MQWAVGRRW) lie on the Lumenal side of the membrane. Residues 2 to 8 (QWAVGRR) are targeting to endoplasmic reticulum-associated lipid droplets. Residues 10 to 30 (LWVALFLAAVAVLTQIVWLWL) traverse the membrane as a helical segment. Residues 31–223 (GTQNFVFQRE…LTTYLFGQDP (193 aa)) lie on the Cytoplasmic side of the membrane. The important for ligand-binding stretch occupies residues 99–106 (SLSEYVLL). The C-terminal hydrophobic region stretch occupies residues 177-223 (VIPSTLGFALADTVFSTQDFLTLFYTLRVYARALQLELTTYLFGQDP).

The protein belongs to the ERG2 family. Homotrimer. Forms a ternary complex with ANK2 and ITPR3. The complex is disrupted by agonists. Interacts with KCNA4. Interacts with KCNA2; cocaine consumption leads to increased interaction. Interacts with RNF112 in an oxidative stress-regulated manner. Ubiquitously expressed with higher expression in liver, kidney and steroid-producing tissues such as placenta, ovary and adrenal gland.

It localises to the nucleus inner membrane. The protein localises to the nucleus outer membrane. The protein resides in the nucleus envelope. Its subcellular location is the cytoplasmic vesicle. It is found in the endoplasmic reticulum membrane. It localises to the membrane. The protein localises to the lipid droplet. The protein resides in the cell junction. Its subcellular location is the cell membrane. It is found in the cell projection. It localises to the growth cone. The protein localises to the postsynaptic density membrane. Functionally, functions in lipid transport from the endoplasmic reticulum and is involved in a wide array of cellular functions probably through regulation of the biogenesis of lipid microdomains at the plasma membrane. Involved in the regulation of different receptors it plays a role in BDNF signaling and EGF signaling. Also regulates ion channels like the potassium channel and could modulate neurotransmitter release. Plays a role in calcium signaling through modulation together with ANK2 of the ITP3R-dependent calcium efflux at the endoplasmic reticulum. Plays a role in several other cell functions including proliferation, survival and death. Originally identified for its ability to bind various psychoactive drugs it is involved in learning processes, memory and mood alteration. Necessary for proper mitochondrial axonal transport in motor neurons, in particular the retrograde movement of mitochondria. Plays a role in protecting cells against oxidative stress-induced cell death via its interaction with RNF112. In Cavia porcellus (Guinea pig), this protein is Sigma non-opioid intracellular receptor 1 (SIGMAR1).